The sequence spans 294 residues: Lipoprotein NlpI (294 aa).

Positions M1–G18 are cleaved as a signal peptide. C19 carries N-palmitoyl cysteine lipidation. C19 carries S-diacylglycerol cysteine lipidation. TPR repeat units lie at residues A62–M95, P96–Y129, and S234–N267.

As to quaternary structure, homodimer.

The protein resides in the cell membrane. Its function is as follows. May be involved in cell division. May play a role in bacterial septation or regulation of cell wall degradation during cell division. The polypeptide is Lipoprotein NlpI (nlpI) (Shigella boydii serotype 4 (strain Sb227)).